The primary structure comprises 176 residues: HTH-type transcriptional regulator DctR (176 aa).

The 66-residue stretch at 109 to 174 (VPEANVSLSR…ELVRHQHIDY (66 aa)) folds into the HTH luxR-type domain. The H-T-H motif DNA-binding region spans 133-152 (TEDILEKLKISLKTFYCHKH).

May act as a transcriptional regulator of dctA. In Shigella flexneri, this protein is HTH-type transcriptional regulator DctR (dctR).